Consider the following 382-residue polypeptide: Chaperone protein DnaJ (382 aa).

Residues 5 to 70 form the J domain; it reads DFYEILGVPK…QKRAAYDQYG (66 aa). The CR-type zinc-finger motif lies at 137-215; it reads GVTKEIRIPT…CHGHGRVEKT (79 aa). The Zn(2+) site is built by C150, C153, C167, C170, C189, C192, C203, and C206. 4 CXXCXGXG motif repeats span residues 150 to 157, 167 to 174, 189 to 196, and 203 to 210; these read CDICHGSG, CPTCHGSG, CPHCHGRG, and CNKCHGHG.

Belongs to the DnaJ family. As to quaternary structure, homodimer. The cofactor is Zn(2+).

It localises to the cytoplasm. In terms of biological role, participates actively in the response to hyperosmotic and heat shock by preventing the aggregation of stress-denatured proteins and by disaggregating proteins, also in an autonomous, DnaK-independent fashion. Unfolded proteins bind initially to DnaJ; upon interaction with the DnaJ-bound protein, DnaK hydrolyzes its bound ATP, resulting in the formation of a stable complex. GrpE releases ADP from DnaK; ATP binding to DnaK triggers the release of the substrate protein, thus completing the reaction cycle. Several rounds of ATP-dependent interactions between DnaJ, DnaK and GrpE are required for fully efficient folding. Also involved, together with DnaK and GrpE, in the DNA replication of plasmids through activation of initiation proteins. The polypeptide is Chaperone protein DnaJ (Enterobacter sp. (strain 638)).